The chain runs to 460 residues: ATP synthase subunit beta (460 aa).

150–157 is an ATP binding site; it reads GGAGVGKT.

Belongs to the ATPase alpha/beta chains family. In terms of assembly, F-type ATPases have 2 components, CF(1) - the catalytic core - and CF(0) - the membrane proton channel. CF(1) has five subunits: alpha(3), beta(3), gamma(1), delta(1), epsilon(1). CF(0) has three main subunits: a(1), b(2) and c(9-12). The alpha and beta chains form an alternating ring which encloses part of the gamma chain. CF(1) is attached to CF(0) by a central stalk formed by the gamma and epsilon chains, while a peripheral stalk is formed by the delta and b chains.

It is found in the cell inner membrane. The catalysed reaction is ATP + H2O + 4 H(+)(in) = ADP + phosphate + 5 H(+)(out). Its function is as follows. Produces ATP from ADP in the presence of a proton gradient across the membrane. The catalytic sites are hosted primarily by the beta subunits. In Escherichia coli (strain SMS-3-5 / SECEC), this protein is ATP synthase subunit beta.